A 160-amino-acid chain; its full sequence is MGVTKKPDLNDPVSRAKLAKGMGHNYYGEPAWPNDLLYIFPIVILGTIACIAGLAVLEPSMIGEPANPFATPLEILPEWYFYPVFQILRTVPNKLLGVLLMASVPAGLLTVPFLENVNKFQNPFRRPVATTVFLIGTVVAIWLGIGAALPIDRSLTLGLF.

Helical transmembrane passes span 36–56 (LLYIFPIVILGTIACIAGLAV), 95–115 (LLGVLLMASVPAGLLTVPFLE), and 131–151 (TVFLIGTVVAIWLGIGAALPI).

This sequence belongs to the cytochrome b family. PetD subfamily. The 4 large subunits of the cytochrome b6-f complex are cytochrome b6, subunit IV (17 kDa polypeptide, petD), cytochrome f and the Rieske protein, while the 4 small subunits are petG, petL, petM and petN. The complex functions as a dimer.

It is found in the plastid. It localises to the chloroplast thylakoid membrane. Component of the cytochrome b6-f complex, which mediates electron transfer between photosystem II (PSII) and photosystem I (PSI), cyclic electron flow around PSI, and state transitions. This chain is Cytochrome b6-f complex subunit 4, found in Psilotum nudum (Whisk fern).